Consider the following 158-residue polypeptide: Transcription elongation factor GreA (158 aa).

The stretch at 10–75 forms a coiled coil; sequence TKEGKEKLEQ…QMLENMIRNA (66 aa).

This sequence belongs to the GreA/GreB family.

Necessary for efficient RNA polymerase transcription elongation past template-encoded arresting sites. The arresting sites in DNA have the property of trapping a certain fraction of elongating RNA polymerases that pass through, resulting in locked ternary complexes. Cleavage of the nascent transcript by cleavage factors such as GreA or GreB allows the resumption of elongation from the new 3'terminus. GreA releases sequences of 2 to 3 nucleotides. This is Transcription elongation factor GreA from Geobacillus kaustophilus (strain HTA426).